Consider the following 396-residue polypeptide: L-lactate dehydrogenase (396 aa).

In terms of domain architecture, FMN hydroxy acid dehydrogenase spans 1–380 (MIISAASDYR…TQDSLVQGLG (380 aa)). Tyrosine 24 lines the substrate pocket. 2 residues coordinate FMN: serine 106 and glutamine 127. Tyrosine 129 is a substrate binding site. Threonine 155 is an FMN binding site. A substrate-binding site is contributed by arginine 164. Lysine 251 serves as a coordination point for FMN. The active-site Proton acceptor is the histidine 275. Arginine 278 serves as a coordination point for substrate. An FMN-binding site is contributed by 306–330 (DSGIRNGLDVVRMIALGADTILLGR).

It belongs to the FMN-dependent alpha-hydroxy acid dehydrogenase family. The cofactor is FMN.

Its subcellular location is the cell inner membrane. The enzyme catalyses (S)-lactate + A = pyruvate + AH2. Functionally, catalyzes the conversion of L-lactate to pyruvate. Is coupled to the respiratory chain. The protein is L-lactate dehydrogenase of Escherichia coli O81 (strain ED1a).